The following is a 182-amino-acid chain: CDP-diacylglycerol--glycerol-3-phosphate 3-phosphatidyltransferase (182 aa).

Topologically, residues 2 to 12 (QFNIPTLLTLF) are cytoplasmic. A helical transmembrane segment spans residues 13–37 (RVALIPFFVLAFYLPFVWAPLLCAL). Over 38–60 (IFVFAAVTDWFDGFLARRWKQTT) the chain is Periplasmic. The helical transmembrane segment at 61–81 (RFGAFLDPVADKVMVAVALVL) threads the bilayer. The Cytoplasmic portion of the chain corresponds to 82–86 (VAEYY). Residues 87 to 107 (HSWWITLPAATMIAREIIISA) traverse the membrane as a helical segment. The Periplasmic portion of the chain corresponds to 108–145 (LREWMAEIGKRSSVAVSWIGKVKTTAQMMALFALLWRP). Residues 146-168 (ERIVEGIGVAALYIAAVLTFWSM) form a helical membrane-spanning segment. The Cytoplasmic portion of the chain corresponds to 169 to 181 (FQYLNAARHDLLE).

It belongs to the CDP-alcohol phosphatidyltransferase class-I family.

Its subcellular location is the cell inner membrane. The enzyme catalyses a CDP-1,2-diacyl-sn-glycerol + sn-glycerol 3-phosphate = a 1,2-diacyl-sn-glycero-3-phospho-(1'-sn-glycero-3'-phosphate) + CMP + H(+). The protein operates within phospholipid metabolism; phosphatidylglycerol biosynthesis; phosphatidylglycerol from CDP-diacylglycerol: step 1/2. Catalyzes the conversion of cytidine diphosphate diacylglycerol (CDP-DG) and glycerol 3-phosphate into phosphatidylglycerol. Essential for the synthesis of anionic phospholipids, thereby playing a role in balancing the ratio of zwitterionic and anionic phospholipids, which is thought to be important for normal membrane function. The sequence is that of CDP-diacylglycerol--glycerol-3-phosphate 3-phosphatidyltransferase from Pectobacterium atrosepticum (strain SCRI 1043 / ATCC BAA-672) (Erwinia carotovora subsp. atroseptica).